The following is a 373-amino-acid chain: MPGWSCLVTGAGGFLGQRIVQLLVQEKDLKEVRVLDKVFRPETREEFFNLGTSIKVTVLEGDILDTQCLRRACQGISVVIHTAALIDVTGVNPRQTILDVNLKGTQNLLEACVQASVPAFIYCSTVDVAGPNSYKKIILNGHEEEHHESTWSNPYPYSKKMAEKAVLAANGSILKNGGTLHTCALRPMYIYGERSPFLSVMILAALKSKGILNVTGKFSIANPVYVGNVAWAHILAARGLRDPKKSQNVQGQFYYISDDTPHQSYDDLNYTLSKEWGLHLDSSWSLPLPLLYWLAFLLEIVSFFLHPVYNYRPSFNRHLVTLSNSKFTFSYKKAQRDLGYKPLVSWEEAKQKTSEWIGTLVEQHRETLDTKSQ.

Tyr-155 acts as the Proton acceptor in catalysis. Lys-159 serves as a coordination point for NAD(+). A helical membrane pass occupies residues 288 to 308 (LPLLYWLAFLLEIVSFFLHPV). Position 350 is an N6-acetyllysine (Lys-350).

This sequence belongs to the 3-beta-HSD family. As to expression, skin, placenta, also detectable in ovary and adrenal gland.

It is found in the endoplasmic reticulum membrane. The protein localises to the mitochondrion membrane. It catalyses the reaction a 3beta-hydroxy-Delta(5)-steroid + NAD(+) = a 3-oxo-Delta(5)-steroid + NADH + H(+). The catalysed reaction is a 3-oxo-Delta(5)-steroid = a 3-oxo-Delta(4)-steroid. Its pathway is lipid metabolism; steroid biosynthesis. In terms of biological role, 3-beta-HSD is a bifunctional enzyme, that catalyzes the oxidative conversion of Delta(5)-ene-3-beta-hydroxy steroid, and the oxidative conversion of ketosteroids. The 3-beta-HSD enzymatic system plays a crucial role in the biosynthesis of all classes of hormonal steroids. The protein is 3 beta-hydroxysteroid dehydrogenase/Delta 5--&gt;4-isomerase type 4 (Hsd3b6) of Rattus norvegicus (Rat).